We begin with the raw amino-acid sequence, 483 residues long: Betaine aldehyde dehydrogenase (483 aa).

K(+) is bound by residues Ile27 and Asp93. Residue 149–151 (GAW) coordinates NAD(+). Residue Lys161 is the Charge relay system of the active site. Residue 175–178 (KPSE) coordinates NAD(+). Val179 contributes to the K(+) binding site. 228-231 (SVPT) lines the NAD(+) pocket. Val243 is a K(+) binding site. The Proton acceptor role is filled by Glu249. 3 residues coordinate NAD(+): Gly251, Cys283, and Glu380. Residue Cys283 is the Nucleophile of the active site. At Cys283 the chain carries Cysteine sulfenic acid (-SOH). Lys450 and Gly453 together coordinate K(+). Glu457 acts as the Charge relay system in catalysis.

This sequence belongs to the aldehyde dehydrogenase family. Dimer of dimers. K(+) is required as a cofactor.

It catalyses the reaction betaine aldehyde + NAD(+) + H2O = glycine betaine + NADH + 2 H(+). It participates in amine and polyamine biosynthesis; betaine biosynthesis via choline pathway; betaine from betaine aldehyde: step 1/1. In terms of biological role, involved in the biosynthesis of the osmoprotectant glycine betaine. Catalyzes the irreversible oxidation of betaine aldehyde to the corresponding acid. The polypeptide is Betaine aldehyde dehydrogenase (Cereibacter sphaeroides (strain ATCC 17023 / DSM 158 / JCM 6121 / CCUG 31486 / LMG 2827 / NBRC 12203 / NCIMB 8253 / ATH 2.4.1.) (Rhodobacter sphaeroides)).